Reading from the N-terminus, the 642-residue chain is Conserved oligomeric Golgi complex subunit 6 (642 aa).

The protein belongs to the COG6 family. In terms of assembly, component of the conserved oligomeric Golgi complex which is composed of eight different subunits and is required for normal Golgi morphology and localization.

It localises to the golgi apparatus membrane. Required for normal Golgi function. The sequence is that of Conserved oligomeric Golgi complex subunit 6 (cogc-6) from Caenorhabditis elegans.